The chain runs to 402 residues: Arabinosyltransferase RRA1 (402 aa).

The Cytoplasmic portion of the chain corresponds to 1-13; the sequence is MAVRKEKVQPFRE. Residues 14–34 form a helical; Signal-anchor for type II membrane protein membrane-spanning segment; that stretch reads CGIAIAVLVGIFIGCVCTILI. Residues 35–402 lie on the Lumenal side of the membrane; it reads PNDFVNFRSS…DALDRFRDGS (368 aa). The DXD motif motif lies at 225–227; that stretch reads DVD. The N-linked (GlcNAc...) asparagine glycan is linked to N253.

This sequence belongs to the glycosyltransferase 77 family. As to expression, expressed in leaf meristem and at points of cauline leaf attachments on the primary stem. Expressed at low levels in siliques.

Its subcellular location is the golgi apparatus membrane. Functionally, plays a role in the arabinosylation of cell wall components. Involved in the arabinosylation of extensin proteins in root hair cells. Extensins are structural glycoproteins present in cell walls and its arabinosylation is important for root hair cell development. This chain is Arabinosyltransferase RRA1, found in Arabidopsis thaliana (Mouse-ear cress).